The chain runs to 103 residues: Large ribosomal subunit protein eL42 (103 aa).

The interval 37–56 is disordered; sequence GKRRYDRKQSGFGGQTKPVF.

The protein belongs to the eukaryotic ribosomal protein eL42 family.

The protein is Large ribosomal subunit protein eL42 (rpl36a) of Dictyostelium discoideum (Social amoeba).